The primary structure comprises 139 residues: Ribulose bisphosphate carboxylase small subunit (139 aa).

It belongs to the RuBisCO small chain family. In terms of assembly, heterohexadecamer of 8 large and 8 small subunits.

It is found in the plastid. The protein resides in the chloroplast. Its function is as follows. RuBisCO catalyzes two reactions: the carboxylation of D-ribulose 1,5-bisphosphate, the primary event in carbon dioxide fixation, as well as the oxidative fragmentation of the pentose substrate in the photorespiration process. Both reactions occur simultaneously and in competition at the same active site. Although the small subunit is not catalytic it is essential for maximal activity. The chain is Ribulose bisphosphate carboxylase small subunit from Pylaiella littoralis (Seaweed).